We begin with the raw amino-acid sequence, 246 residues long: tRNA pseudouridine synthase A (246 aa).

Asp52 (nucleophile) is an active-site residue. Residue Tyr110 coordinates substrate.

Belongs to the tRNA pseudouridine synthase TruA family. In terms of assembly, homodimer.

The catalysed reaction is uridine(38/39/40) in tRNA = pseudouridine(38/39/40) in tRNA. Formation of pseudouridine at positions 38, 39 and 40 in the anticodon stem and loop of transfer RNAs. This is tRNA pseudouridine synthase A from Exiguobacterium sp. (strain ATCC BAA-1283 / AT1b).